A 337-amino-acid polypeptide reads, in one-letter code: Fructose-1,6-bisphosphatase class 1 (337 aa).

Mg(2+) is bound by residues glutamate 89, aspartate 112, leucine 114, and aspartate 115. Substrate contacts are provided by residues 115-118 (DGSS), asparagine 208, tyrosine 241, and lysine 271. A Mg(2+)-binding site is contributed by glutamate 277.

Belongs to the FBPase class 1 family. In terms of assembly, homotetramer. Requires Mg(2+) as cofactor.

It is found in the cytoplasm. The enzyme catalyses beta-D-fructose 1,6-bisphosphate + H2O = beta-D-fructose 6-phosphate + phosphate. It participates in carbohydrate biosynthesis; gluconeogenesis. This Psychromonas ingrahamii (strain DSM 17664 / CCUG 51855 / 37) protein is Fructose-1,6-bisphosphatase class 1.